The chain runs to 232 residues: MTNYREIAWQGLWKNNPGLVQLLGLCPLLAVTATLTNALGLGVATMLVLIGSNILVSLVRDYVPKEIRIPVFVMIIAALVTAVQLLINAYAYGLYLSLGIFLPLIVTNCIIIGRAEAFASRNNAFSAAFDGLMMGLGFTLVLAVLGATREILGQGTLFDGADQLLGPWAKALTIQVWQVDTPFLLAMLPPGAFIVMGLLIALKNVIDKKLKERQPEAAVQPSVTRARITKVS.

6 helical membrane passes run 18-38, 39-59, 69-89, 93-113, 127-147, and 182-202; these read GLVQ…LTNA, LGLG…VSLV, IPVF…LINA, GLYL…IIIG, AAFD…VLGA, and PFLL…LIAL.

Belongs to the NqrDE/RnfAE family. As to quaternary structure, the complex is composed of six subunits: RnfA, RnfB, RnfC, RnfD, RnfE and RnfG.

The protein localises to the cell inner membrane. In terms of biological role, part of a membrane-bound complex that couples electron transfer with translocation of ions across the membrane. The protein is Ion-translocating oxidoreductase complex subunit E of Shewanella sp. (strain MR-4).